Here is a 369-residue protein sequence, read N- to C-terminus: Putative esterase slr0264 (369 aa).

Catalysis depends on charge relay system residues Ser162, Asp303, and His334.

Belongs to the AB hydrolase superfamily. AB hydrolase 4 family.

The sequence is that of Putative esterase slr0264 from Synechocystis sp. (strain ATCC 27184 / PCC 6803 / Kazusa).